Consider the following 339-residue polypeptide: DNA-directed RNA polymerase subunit alpha (339 aa).

The interval 1–233 is alpha N-terminal domain (alpha-NTD); the sequence is MVREEVAGST…DLFLPFLHAE (233 aa). The interval 264-339 is alpha C-terminal domain (alpha-CTD); it reads KKGIPLNCIF…IDLLKNKLSF (76 aa).

It belongs to the RNA polymerase alpha chain family. As to quaternary structure, in plastids the minimal PEP RNA polymerase catalytic core is composed of four subunits: alpha, beta, beta', and beta''. When a (nuclear-encoded) sigma factor is associated with the core the holoenzyme is formed, which can initiate transcription.

The protein resides in the plastid. The protein localises to the chloroplast. The enzyme catalyses RNA(n) + a ribonucleoside 5'-triphosphate = RNA(n+1) + diphosphate. In terms of biological role, DNA-dependent RNA polymerase catalyzes the transcription of DNA into RNA using the four ribonucleoside triphosphates as substrates. The chain is DNA-directed RNA polymerase subunit alpha from Thinopyrum bessarabicum (Wheatgrass).